An 808-amino-acid chain; its full sequence is MASDENIGADGEQKPSRPFLRKGQGTARFRMPRNNKTSAGAPPTSELSSASSPSINVPRFSLSNALPNSARTVDSGISNEDETRPPTTASLPMDQPSLSSSPENRLNPAPSVAEEHGHSGQHAEEEEDNDTDEVSAMPSFVPDEPSTLVNSDHELSDDALKYKNAAAEFKAFERRMDSMRSASTITTSLATPSSCAPSNSSEPPTRSTPIMNDLGVGPNNHNWPSSMQELSGISLETPQARPLGSNRINQLVRSEAQTGISLLQHHERPTVTAPLRRNDMMNSSRQNPQNGNVQDENRPEHVYDQPIHVPGSSLDRQKLEIEIRRHRNLNIQLRDTIAHLDYAEESVHTTKRQLEEKISEVNNFKKELIEEFKKCKKGVEEEFEKKFEKIKEDYDELYEKLKRDQRDLERDQKILKKGTGERNKEFTETIATLRDKLRASETKNAQYRQDIRVRDEKLKKKDEEIEKLQKDGNRLKSTLQTLEKRVKQLRTEKERDDKEKEMFAKVAMNRKTSNPVPPVLNQSVPISITSNGPSRHPSSSSLTTFRKPSTSNRERGVSWADEPNEQSLEAVPQEFLMMPVKEMPGKFGKCTIYRDSLGETSKVTDTIANGLLFEYSNGDLRWVNRQNAVNIYISAVDKTVRIDLPTYNISIIHTFQRQVEVLRPGNNITLISIKRREVRTDLIYQNGMYKTEIFNRDGRYVTKDFSNQEVSRKYNPGTHTYRDNQCRYVLVTDYNDFELVEPEFRLRWYQGDPTGLNNQYILKIIGRPECSEKTLRLEVNLSTCEGTLETAEMIGDKRRKTTLFQWKK.

Positions 1 to 151 (MASDENIGAD…PDEPSTLVNS (151 aa)) are disordered. Residues 42–54 (PPTSELSSASSPS) are compositionally biased toward low complexity. Polar residues-rich tracts occupy residues 61–78 (SLSN…SGIS) and 85–104 (PPTT…SPEN). Positions 113–123 (AEEHGHSGQHA) are enriched in basic and acidic residues. A compositionally biased stretch (acidic residues) spans 124–133 (EEEEDNDTDE). Residues 161–181 (KYKNAAAEFKAFERRMDSMRS) are a coiled coil. Disordered regions lie at residues 187-206 (TSLA…PPTR) and 271-298 (VTAP…DENR). Residues 280 to 294 (MMNSSRQNPQNGNVQ) show a composition bias toward polar residues. The stretch at 314 to 503 (LDRQKLEIEI…ERDDKEKEMF (190 aa)) forms a coiled coil. Residues 511–529 (KTSNPVPPVLNQSVPISIT) show a composition bias toward polar residues. A disordered region spans residues 511 to 564 (KTSNPVPPVLNQSVPISITSNGPSRHPSSSSLTTFRKPSTSNRERGVSWADEPN). Residues 530–541 (SNGPSRHPSSSS) show a composition bias toward low complexity. Polar residues predominate over residues 542–551 (LTTFRKPSTS).

As to quaternary structure, interacts with hyls-1; leading to hyls-1 localization into newly forming centrioles.

It localises to the cytoplasm. Its subcellular location is the cytoskeleton. The protein localises to the microtubule organizing center. The protein resides in the centrosome. Functionally, required for centrosome duplication. Plays a central role in determining centrosome size. The protein is Spindle assembly abnormal protein 4 (sas-4) of Caenorhabditis elegans.